Consider the following 389-residue polypeptide: Chalcone synthase 1 (389 aa).

The active site involves C163.

Belongs to the thiolase-like superfamily. Chalcone/stilbene synthases family.

It carries out the reaction (E)-4-coumaroyl-CoA + 3 malonyl-CoA + 3 H(+) = 2',4,4',6'-tetrahydroxychalcone + 3 CO2 + 4 CoA. It participates in secondary metabolite biosynthesis; flavonoid biosynthesis. Functionally, the primary product of this enzyme is 4,2',4',6'-tetrahydroxychalcone (also termed naringenin-chalcone or chalcone) which can under specific conditions spontaneously isomerize into naringenin. The sequence is that of Chalcone synthase 1 (CHS1) from Citrus sinensis (Sweet orange).